A 197-amino-acid polypeptide reads, in one-letter code: Large ribosomal subunit protein bL17 (197 aa).

The interval 136 to 197 (RAAKKADAPQ…DAEKSSDTEK (62 aa)) is disordered. The segment covering 148–187 (VADEATDADESVEDEAPAQDDSADEVEAAADETPADDAEA) has biased composition (acidic residues). Over residues 188–197 (DAEKSSDTEK) the composition is skewed to basic and acidic residues.

It belongs to the bacterial ribosomal protein bL17 family. Part of the 50S ribosomal subunit. Contacts protein L32.

The chain is Large ribosomal subunit protein bL17 from Beutenbergia cavernae (strain ATCC BAA-8 / DSM 12333 / CCUG 43141 / JCM 11478 / NBRC 16432 / NCIMB 13614 / HKI 0122).